A 146-amino-acid polypeptide reads, in one-letter code: Zinc metalloproteinase-disintegrin salmosin-3 (146 aa).

The Peptidase M12B domain occupies 1–57 (SCPCDANSCIMSATLSNEPSSRFSDCSFSLPSRFSDCSFNQYSSDIIHYHECLLNEP). Cystine bridges form between Cys2–Cys37, Cys4–Cys9, Cys68–Cys87, Cys79–Cys97, Cys81–Cys92, Cys91–Cys114, Cys105–Cys111, Cys110–Cys135, and Cys123–Cys142. Residues 65-146 (PPVCGNYYPE…GQSGVCPRNT (82 aa)) enclose the Disintegrin domain. Residues 127 to 129 (RGD) carry the Cell attachment site motif.

Belongs to the venom metalloproteinase (M12B) family. P-II subfamily. P-IIb sub-subfamily. As to quaternary structure, monomer (disintegrin). Requires Zn(2+) as cofactor. As to expression, expressed by the venom gland.

The protein resides in the secreted. Its function is as follows. Snake venom zinc metalloproteinase that inhibits ADP-induced platelet aggregation (probably by binding integrin alpha-IIb/beta-3 (ITGA2B/ITGB3)) and degrades fibrinogen. The polypeptide is Zinc metalloproteinase-disintegrin salmosin-3 (Gloydius brevicauda (Korean slamosa snake)).